Reading from the N-terminus, the 288-residue chain is MTTAAKVILACCLLGAFHIQISSSSAIPIWEFLTRNEKMSHLYSTFAQLVSVHCKSTAAVGGLPVNQCKHNLLGYGSAKLQTLSDVQLEALDPYQRDANELIWSSIMGDHPSGASLVTTRQPLQQPLPTPPASSLIILTRQQLPHGASHAHPIQSSGSATNPIFESGEQKHKYAMDMDKAYGYGPQSSSELPMAAALTSEPSKRFLTGPLVIRVRPDGSPVEEDKMMPLPRDEDLPYFHLGLAAAQPNRHRKIATISSLKQQHFASILQSDLQPPHQTQRRLFRQQQA.

Expressed in head, but not in the body. Expression levels oscillate with the circadian rhythm.

Its function is as follows. Involved in the generation of biological rhythms (Potential). In the head, oscillates in abundance with a daily peak during early night, even under constant darkness. Oscillation is dependent on period (per) function. The chain is Rhythmically expressed gene 5 protein (Reg-5) from Drosophila melanogaster (Fruit fly).